Consider the following 709-residue polypeptide: Dibasic-processing endoprotease (709 aa).

Residues 1-22 (MHPALLCGPILAIFLQFLVSSC) form the signal peptide. 2 consecutive propeptides follow at residues 23–82 (SPLE…IRKR) and 83–102 (GIDA…RYKR). Topologically, residues 103–668 (DASESDELLN…QPVLEPSYRE (566 aa)) are lumenal. Positions 128-440 (QWHIFNSNNP…FGKLDASKFV (313 aa)) constitute a Peptidase S8 domain. Asparagine 155 is a glycosylation site (N-linked (GlcNAc...) asparagine). Catalysis depends on charge relay system residues aspartate 162 and histidine 200. Intrachain disulfides connect cysteine 216–cysteine 363 and cysteine 308–cysteine 338. Catalysis depends on serine 371, which acts as the Charge relay system. One can recognise a P/Homo B domain in the interval 449–588 (VNPQTWLIAP…QLALWGESEN (140 aa)). Asparagine 463, asparagine 471, and asparagine 620 each carry an N-linked (GlcNAc...) asparagine glycan. A helical transmembrane segment spans residues 669–693 (IVAFITFFLLFAFIFVAVIWTWISA). Over 694-709 (FWKAKAPPPLSQQEIA) the chain is Cytoplasmic.

It belongs to the peptidase S8 family. Furin subfamily. Requires Ca(2+) as cofactor. In terms of processing, N-glycosylated.

It is found in the golgi apparatus. It localises to the trans-Golgi network membrane. Its function is as follows. Membrane-bound, subtilisin-like serine protease that processes the P-factor precursor and other precursor proteins. Essential for cell viability. Cleaves substrate on the C-terminal side of dibasic residues. The polypeptide is Dibasic-processing endoprotease (krp1) (Schizosaccharomyces pombe (strain 972 / ATCC 24843) (Fission yeast)).